The sequence spans 184 residues: MKIAQEIRAGNVIMHGKDPMVVLKTEYSRGGRNSATVRMKLKSLIANFNTEVVFKADDKIDQIVLDKKECTYSYFADPMYVCMDTEYNQYEVEAENMGDALNYLEDGMPVEVVFYDGKAISVELPTSVEREITWTEPAVKGDTSGKVLKPAKIATGFEVPVPLFVSQGDKIEIDTRTGEYRKRV.

The protein belongs to the elongation factor P family.

The protein resides in the cytoplasm. It functions in the pathway protein biosynthesis; polypeptide chain elongation. Involved in peptide bond synthesis. Stimulates efficient translation and peptide-bond synthesis on native or reconstituted 70S ribosomes in vitro. Probably functions indirectly by altering the affinity of the ribosome for aminoacyl-tRNA, thus increasing their reactivity as acceptors for peptidyl transferase. This is Elongation factor P from Variovorax paradoxus (strain S110).